Here is a 546-residue protein sequence, read N- to C-terminus: Low-affinity methionine permease (546 aa).

Residues 1-70 (MEPLLFNSGK…QGRHLGVFST (70 aa)) lie on the Extracellular side of the membrane. Residues 71–91 (VVLFVSRIMGSGIFAVPSVIL) traverse the membrane as a helical segment. The Cytoplasmic portion of the chain corresponds to 92 to 98 (LNTGGNK). The helical transmembrane segment at 99–119 (LIYFAIWVFSAAIAFAGLYLF) threads the bilayer. Over 120 to 148 (LEFGSWIPKSGGRKNFLERSFERPRLLIS) the chain is Extracellular. The helical transmembrane segment at 149 to 169 (VVFSCYSVLTGYALTGSIVFG) threads the bilayer. Residues 170–188 (KYVLSAFGVTDDSWSKYVS) lie on the Cytoplasmic side of the membrane. The chain crosses the membrane as a helical span at residues 189–209 (ISFIIFAVLIHGVSVRHGVFI). Topologically, residues 210 to 213 (QNAL) are extracellular. The chain crosses the membrane as a helical span at residues 214-234 (GGLKLIMIVLMCFAGLYTLFF). Residues 235 to 254 (YKSTGQVAWDLPVTQVEKDS) lie on the Cytoplasmic side of the membrane. The chain crosses the membrane as a helical span at residues 255-275 (LLSVSSIATAFISSFFCFSGW). The Extracellular portion of the chain corresponds to 276 to 297 (DTVHTVTSEIKNPVKTLKVSGP). A helical membrane pass occupies residues 298 to 318 (LSLIICFVCYTMMNVAYLKVL). Position 319 (Thr319) is a topological domain, cytoplasmic. A helical membrane pass occupies residues 320–340 (YEEIVSAGPLVGSVLFTKLFG). Topologically, residues 341 to 346 (PRVGGK) are extracellular. A helical transmembrane segment spans residues 347 to 367 (FIAFSIAISAASNILVVIYSI). The Cytoplasmic segment spans residues 368-393 (SRVNQEIFKEGYLPFSIHMSKNWPFD). A helical membrane pass occupies residues 394–414 (APLPSISLCGFITIAWILILP). The Extracellular segment spans residues 415-423 (KEGESFNYL). A helical membrane pass occupies residues 424–444 (VSMDGYGNQFFLLLVAIGLFI). Residues 445-459 (WRFKHKNEVPEIRAS) lie on the Cytoplasmic side of the membrane. The chain crosses the membrane as a helical span at residues 460-480 (TFGVLAIITLSLYMLMAPFFA). Residues 481–494 (DPSLNRVGFLPPYQ) are Extracellular-facing. A helical transmembrane segment spans residues 495–515 (IMSLLVIVACFFFWLVKFVLL). At 516–546 (PKFFHYKLLPKITYLHDGLIVTEWVKKPCLC) the chain is on the cytoplasmic side.

It to yeast high affinity methionine permease (MUP1).

It is found in the membrane. In terms of biological role, very low affinity permease for methionine. The chain is Low-affinity methionine permease (MUP3) from Saccharomyces cerevisiae (strain ATCC 204508 / S288c) (Baker's yeast).